Reading from the N-terminus, the 581-residue chain is Sodium/hydrogen exchanger 8 (581 aa).

Transmembrane regions (helical) follow at residues 60-80 (MTIF…HLLI), 84-104 (LHFL…GAVI), 123-143 (PNMF…YSLH), 156-176 (LFAV…IYFL), 191-211 (FAFG…IFNA), 264-284 (FLKM…ISAL), 311-331 (GLAE…GIVM), 354-374 (VAFL…FSFP), 379-399 (ISFV…NIFP), 417-437 (MFIM…SLHL), and 451-471 (TTIV…MPLI). T510 is modified (phosphothreonine). Phosphoserine is present on residues S571 and S573.

Belongs to the monovalent cation:proton antiporter 1 (CPA1) transporter (TC 2.A.36) family. As to expression, ubiquitous. Strongly expressed in skeletal muscle and kidney. Detected throughout the entire gastrointestinal tract, with high expression detected in stomach, duodenum and ascending colon.

Its subcellular location is the golgi apparatus membrane. It is found in the golgi apparatus. The protein localises to the trans-Golgi network membrane. The protein resides in the endosome. It localises to the multivesicular body membrane. Its subcellular location is the apical cell membrane. It is found in the cytoplasmic vesicle. The protein localises to the secretory vesicle. The protein resides in the acrosome. It carries out the reaction Na(+)(in) + H(+)(out) = Na(+)(out) + H(+)(in). With respect to regulation, HOE642 inhibits SLC9A8 activity. Na(+)/H(+) antiporter. Mediates the electoneutral exchange of intracellular H(+) ions for extracellular Na(+) in 1:1 stoichiometry. Acts as an Na(+)/H(+) exchanger in the trans-Golgi. Contributes to the regulation of pH regulation of Golgi apparatus, and consequently, in protein trafficking and endosomal morphology. In germ cells, plays a crucial role in acrosome biogenesis and sperm development, probably by playing a role in the fusion of the Golgi-derived vesicles that form the acrosomal cap. Can also be active at the cell surface of specialized cells. In the small intestine, at the cell membrane, plays a major physiological role in transepithelial absorption of Na(+) and regulates intracellular pH homeostasis of intestinal epithelial cells. Acts as an important regulator of mucosal integrity in the intestine and in the stomach, could mediate the pH fluctuation necessary for mucin exocytosis or assist membrane trafficking of other proteins. Plays a role in photoreceptor survival and in the maintenance of intracellular pH homeostasis in retinal pigment epithelium (RPE cells). This chain is Sodium/hydrogen exchanger 8, found in Homo sapiens (Human).